The primary structure comprises 628 residues: Chaperone protein HtpG (628 aa).

Positions Met-1–Arg-334 are a; substrate-binding. The tract at residues Glu-335 to Lys-550 is b. The segment at Met-551–Gly-628 is c.

The protein belongs to the heat shock protein 90 family. Homodimer.

The protein localises to the cytoplasm. Molecular chaperone. Has ATPase activity. The sequence is that of Chaperone protein HtpG from Rhodopseudomonas palustris (strain BisB5).